Consider the following 109-residue polypeptide: Nucleoid-associated protein VS_0917 (109 aa).

Disordered regions lie at residues Met1–Gln22 and Gln88–Phe109. The span at Asn9–Gln18 shows a compositional bias: low complexity.

It belongs to the YbaB/EbfC family. In terms of assembly, homodimer.

It is found in the cytoplasm. The protein localises to the nucleoid. Functionally, binds to DNA and alters its conformation. May be involved in regulation of gene expression, nucleoid organization and DNA protection. The protein is Nucleoid-associated protein VS_0917 of Vibrio atlanticus (strain LGP32) (Vibrio splendidus (strain Mel32)).